A 147-amino-acid polypeptide reads, in one-letter code: UPF0306 protein YhbP (147 aa).

This sequence belongs to the UPF0306 family.

This Escherichia fergusonii (strain ATCC 35469 / DSM 13698 / CCUG 18766 / IAM 14443 / JCM 21226 / LMG 7866 / NBRC 102419 / NCTC 12128 / CDC 0568-73) protein is UPF0306 protein YhbP.